The chain runs to 188 residues: Putative 3-methyladenine DNA glycosylase (188 aa).

Belongs to the DNA glycosylase MPG family.

The chain is Putative 3-methyladenine DNA glycosylase from Ehrlichia ruminantium (Cowdria ruminantium).